Reading from the N-terminus, the 511-residue chain is Peroxisomal N(1)-acetyl-spermine/spermidine oxidase (511 aa).

Met1 is subject to N-acetylmethionine. FAD is bound by residues Ala24, Glu45, Arg53, and 69 to 70 (HW). The substrate site is built by His72 and Val194. Val247 contacts FAD. Asn320 provides a ligand contact to substrate. Residues Glu472 and 481–482 (TT) contribute to the FAD site. The short motif at 509–511 (PRL) is the Microbody targeting signal element.

The protein belongs to the flavin monoamine oxidase family. Monomer. The cofactor is FAD. As to expression, widely expressed. Not detected in spleen. Expressed at lower level in neoplastic tissues.

It is found in the peroxisome. It localises to the cytoplasm. It catalyses the reaction N(1)-acetylspermine + O2 + H2O = 3-acetamidopropanal + spermidine + H2O2. The enzyme catalyses N(1)-acetylspermidine + O2 + H2O = 3-acetamidopropanal + putrescine + H2O2. The catalysed reaction is N(1),N(12)-diacetylspermine + O2 + H2O = 3-acetamidopropanal + N(1)-acetylspermidine + H2O2. Its pathway is amine and polyamine metabolism; spermine metabolism. Functionally, flavoenzyme which catalyzes the oxidation of N(1)-acetylspermine to spermidine and is thus involved in the polyamine back-conversion. Can also oxidize N(1)-acetylspermidine to putrescine. Substrate specificity: N(1)-acetylspermine = N(1)-acetylspermidine &gt; N(1),N(12)-diacylspermine &gt;&gt; spermine. Does not oxidize spermidine. Plays an important role in the regulation of polyamine intracellular concentration and has the potential to act as a determinant of cellular sensitivity to the antitumor polyamine analogs. The chain is Peroxisomal N(1)-acetyl-spermine/spermidine oxidase (PAOX) from Homo sapiens (Human).